An 849-amino-acid chain; its full sequence is DNA mismatch repair protein MutS (849 aa).

665–672 serves as a coordination point for ATP; sequence GPNMAGKS.

This sequence belongs to the DNA mismatch repair MutS family.

Its function is as follows. This protein is involved in the repair of mismatches in DNA. It is possible that it carries out the mismatch recognition step. This protein has a weak ATPase activity. The chain is DNA mismatch repair protein MutS from Wolbachia pipientis wMel.